We begin with the raw amino-acid sequence, 100 residues long: Putative protein adenylyltransferase MJ1379 (100 aa).

Residues 31–45 carry the GSX(10)DXD motif motif; it reads GSYARGEQTEESDID. Mg(2+)-binding residues include D43, D45, and D77.

Belongs to the MntA antitoxin family. As to quaternary structure, probably forms a complex with cognate toxin MJ1380. Mg(2+) serves as cofactor.

The enzyme catalyses L-tyrosyl-[protein] + ATP = O-(5'-adenylyl)-L-tyrosyl-[protein] + diphosphate. It catalyses the reaction O-(5'-adenylyl)-L-tyrosyl-[protein] + ATP = O-[5'-(adenylyl-(5'-&gt;3')-adenylyl)]-L-tyrosyl-[protein] + diphosphate. Functionally, probable antitoxin component of a putative type VII toxin-antitoxin (TA) system. Neutralizes cognate toxic MJ1380 by di-AMPylation. In Methanocaldococcus jannaschii (strain ATCC 43067 / DSM 2661 / JAL-1 / JCM 10045 / NBRC 100440) (Methanococcus jannaschii), this protein is Putative protein adenylyltransferase MJ1379.